The following is a 574-amino-acid chain: Glutamate--tRNA ligase (574 aa).

Residues 109–119 (PNPDFVIHMGN) carry the 'HIGH' region motif.

It belongs to the class-I aminoacyl-tRNA synthetase family. Glutamate--tRNA ligase type 2 subfamily.

It is found in the cytoplasm. The catalysed reaction is tRNA(Glu) + L-glutamate + ATP = L-glutamyl-tRNA(Glu) + AMP + diphosphate. Catalyzes the attachment of glutamate to tRNA(Glu) in a two-step reaction: glutamate is first activated by ATP to form Glu-AMP and then transferred to the acceptor end of tRNA(Glu). The sequence is that of Glutamate--tRNA ligase from Aeropyrum pernix (strain ATCC 700893 / DSM 11879 / JCM 9820 / NBRC 100138 / K1).